The sequence spans 755 residues: Primary amine oxidase (755 aa).

The N-terminal stretch at 1–30 (MANGLKFSPRKTALALAVAVVCAWQSPVFA) is a signal peptide. Residues 411 to 422 (YLDSGDYGMGTL) and 493 to 498 (VGNYDY) each bind substrate. Aspartate 413 serves as the catalytic Proton acceptor. The active-site Schiff-base intermediate with substrate; via topaquinone is the tyrosine 496. Tyrosine 496 bears the 2',4',5'-topaquinone mark. Cu cation-binding residues include histidine 554 and histidine 556. Aspartate 563, leucine 564, aspartate 565, glutamate 603, tyrosine 697, aspartate 700, glutamate 702, and aspartate 708 together coordinate Ca(2+). Residue aspartate 563 participates in Mn(2+) binding. Aspartate 565 contributes to the Mn(2+) binding site. A Mn(2+)-binding site is contributed by aspartate 708. Cu cation is bound at residue histidine 719.

Belongs to the copper/topaquinone oxidase family. In terms of assembly, homodimer. Requires Cu cation as cofactor. The cofactor is Zn(2+). It depends on Ca(2+) as a cofactor. L-topaquinone is required as a cofactor. Mn(2+) serves as cofactor. Post-translationally, topaquinone (TPQ) is generated by copper-dependent autoxidation of a specific tyrosyl residue.

Its subcellular location is the periplasm. It carries out the reaction a primary methyl amine + O2 + H2O = an aldehyde + H2O2 + NH4(+). Functionally, active on tyramine, tryptamine, beta-phenethylamine and dopamine. The protein is Primary amine oxidase (maoA) of Klebsiella aerogenes (Enterobacter aerogenes).